The following is a 247-amino-acid chain: Proteasome subunit alpha type-7-1 (247 aa).

Belongs to the peptidase T1A family. The 26S proteasome consists of a 20S proteasome core and two 19S regulatory subunits. The 20S proteasome core is composed of 28 subunits that are arranged in four stacked rings, resulting in a barrel-shaped structure. The two end rings are each formed by seven alpha subunits, and the two central rings are each formed by seven beta subunits. The catalytic chamber with the active sites is on the inside of the barrel.

Its subcellular location is the cytoplasm. It is found in the nucleus. The proteasome is a multicatalytic proteinase complex which is characterized by its ability to cleave peptides with Arg, Phe, Tyr, Leu, and Glu adjacent to the leaving group at neutral or slightly basic pH. The proteasome has an ATP-dependent proteolytic activity. In Drosophila virilis (Fruit fly), this protein is Proteasome subunit alpha type-7-1 (Pros28.1).